A 318-amino-acid polypeptide reads, in one-letter code: Elongation factor Ts, mitochondrial (318 aa).

The N-terminal 18 residues, 1-18 (MLLQRFFTRALHSTRQLY), are a transit peptide targeting the mitochondrion.

It belongs to the EF-Ts family.

The protein localises to the mitochondrion. Its function is as follows. Associates with the EF-Tu.GDP complex and induces the exchange of GDP to GTP. It remains bound to the aminoacyl-tRNA.EF-Tu.GTP complex up to the GTP hydrolysis stage on the ribosome. In Drosophila melanogaster (Fruit fly), this protein is Elongation factor Ts, mitochondrial.